Reading from the N-terminus, the 271-residue chain is Tryptophan synthase alpha chain (271 aa).

Active-site proton acceptor residues include Glu51 and Asp62.

The protein belongs to the TrpA family. Tetramer of two alpha and two beta chains.

It catalyses the reaction (1S,2R)-1-C-(indol-3-yl)glycerol 3-phosphate + L-serine = D-glyceraldehyde 3-phosphate + L-tryptophan + H2O. The protein operates within amino-acid biosynthesis; L-tryptophan biosynthesis; L-tryptophan from chorismate: step 5/5. In terms of biological role, the alpha subunit is responsible for the aldol cleavage of indoleglycerol phosphate to indole and glyceraldehyde 3-phosphate. This Prochlorococcus marinus (strain NATL2A) protein is Tryptophan synthase alpha chain.